The chain runs to 217 residues: Imidazole glycerol phosphate synthase subunit HisH (217 aa).

Positions 6 to 214 constitute a Glutamine amidotransferase type-1 domain; that stretch reads QIAVVDYDMG…VTQVAAAQLQ (209 aa). Cys84 serves as the catalytic Nucleophile. Residues His189 and Glu191 contribute to the active site.

In terms of assembly, heterodimer of HisH and HisF.

It localises to the cytoplasm. It catalyses the reaction 5-[(5-phospho-1-deoxy-D-ribulos-1-ylimino)methylamino]-1-(5-phospho-beta-D-ribosyl)imidazole-4-carboxamide + L-glutamine = D-erythro-1-(imidazol-4-yl)glycerol 3-phosphate + 5-amino-1-(5-phospho-beta-D-ribosyl)imidazole-4-carboxamide + L-glutamate + H(+). It carries out the reaction L-glutamine + H2O = L-glutamate + NH4(+). It participates in amino-acid biosynthesis; L-histidine biosynthesis; L-histidine from 5-phospho-alpha-D-ribose 1-diphosphate: step 5/9. In terms of biological role, IGPS catalyzes the conversion of PRFAR and glutamine to IGP, AICAR and glutamate. The HisH subunit catalyzes the hydrolysis of glutamine to glutamate and ammonia as part of the synthesis of IGP and AICAR. The resulting ammonia molecule is channeled to the active site of HisF. The polypeptide is Imidazole glycerol phosphate synthase subunit HisH (Synechococcus sp. (strain ATCC 27144 / PCC 6301 / SAUG 1402/1) (Anacystis nidulans)).